The following is a 229-amino-acid chain: Potassium/proton antiporter CemA (229 aa).

4 helical membrane passes run 7 to 27, 114 to 134, 154 to 174, and 189 to 209; these read FTPLLYLASIVFLPWWISLSF, LICFVILSGYSILGNEELLIL, ILLLTDLCIGFHSPHGWELMI, and IISGLVSTFPVILDTIFKYWI.

It belongs to the CemA family.

Its subcellular location is the plastid. The protein resides in the chloroplast inner membrane. The enzyme catalyses K(+)(in) + H(+)(out) = K(+)(out) + H(+)(in). In terms of biological role, contributes to K(+)/H(+) antiport activity by supporting proton efflux to control proton extrusion and homeostasis in chloroplasts in a light-dependent manner to modulate photosynthesis. Prevents excessive induction of non-photochemical quenching (NPQ) under continuous-light conditions. Indirectly promotes efficient inorganic carbon uptake into chloroplasts. This chain is Potassium/proton antiporter CemA, found in Gossypium barbadense (Sea Island cotton).